Reading from the N-terminus, the 375-residue chain is ATP-sensitive inward rectifier potassium channel 15 (375 aa).

Topologically, residues 1–60 (MDAIHLGMSSAPLVKHTNGVGLKAHRPRVMSKSGHSNVRIDKVDGIYLLYLQDLWTTVID) are cytoplasmic. Residues 61-87 (MKWRYKLTLFAATFVMTWFLFGVVYYA) form a helical membrane-spanning segment. At 88 to 113 (IAFIHGDLQLGESNSNHTPCIMKVDS) the chain is on the extracellular side. An intramembrane region (helical; Pore-forming) is located at residues 114–130 (LTGAFLFSLESQTTIGY). The Selectivity filter signature appears at 127–132 (TIGYGV). Residues 131–139 (GVRSITEEC) lie on the Extracellular side of the membrane. A helical membrane pass occupies residues 140–165 (PHAIFLLVAQLVITTLIEIFITGTFL). The Cytoplasmic segment spans residues 166 to 375 (AKIARPKKRA…RSLLLQQSNV (210 aa)).

It belongs to the inward rectifier-type potassium channel (TC 1.A.2.1) family. KCNJ15 subfamily. As to quaternary structure, can form heteromultimeric channels with Kir5.1/KCNJ16. Interacts with PATJ. In terms of tissue distribution, expressed in the proximal segment of the nephron.

It localises to the membrane. It is found in the cell membrane. It carries out the reaction K(+)(in) = K(+)(out). Its activity is regulated as follows. Channel activity is regulated by variations of cytosolic pH; reversibly inhibited by acidic pH values. Inhibited by Ba(2+) and Cs(+) in a voltage-dependent manner. In terms of biological role, inward rectifier potassium channels are characterized by a greater tendency to allow potassium to flow into the cell rather than out of it. Their voltage dependence is regulated by the concentration of extracellular potassium; as external potassium is raised, the voltage range of the channel opening shifts to more positive voltages. The inward rectification is mainly due to the blockage of outward current by internal magnesium. The polypeptide is ATP-sensitive inward rectifier potassium channel 15 (Kcnj15) (Mus musculus (Mouse)).